The chain runs to 425 residues: MKNNKKAFEEACEYIAGGVDSPVRAFASVGSNPLFIKKGKGAYISDIEDNTYIDYVQSWGPLLFGHCDEDVEKACKKALEHGSSFGAPTLAETKLAKFILQDWPHLDKIRFVSSGTEATMSAIRLARGFSKKDKIIKFEGCYHGHSDSLLVSAGSGAATFNTPSSLGVLEDVAKNTLVAIYNDIDSVKNLVEKHSDIACIIIEPIAGNMGLVPAKKEFLQELQALCKKHQILLIFDEVMSGFRASYLGSYGIYNIQADIVTFGKVIGGGMPAAAFAARAEIMDLLSPLGGVYQAGTLSGNPLAMASGYASLKKARNYEGLYEKLEKLGKRLTQGLKEAANDCKIPLQVNCVGSMFGFFFCENPVNNYQDALKSDTKLFAKFHAQMLSKGIYLAPSQFETGFICESMDKKIIEKTIQAAQESFKTL.

N6-(pyridoxal phosphate)lysine is present on lysine 264.

It belongs to the class-III pyridoxal-phosphate-dependent aminotransferase family. HemL subfamily. In terms of assembly, homodimer. Requires pyridoxal 5'-phosphate as cofactor.

It localises to the cytoplasm. It carries out the reaction (S)-4-amino-5-oxopentanoate = 5-aminolevulinate. Its pathway is porphyrin-containing compound metabolism; protoporphyrin-IX biosynthesis; 5-aminolevulinate from L-glutamyl-tRNA(Glu): step 2/2. This chain is Glutamate-1-semialdehyde 2,1-aminomutase, found in Campylobacter lari (strain RM2100 / D67 / ATCC BAA-1060).